We begin with the raw amino-acid sequence, 437 residues long: Enolase (437 aa).

Gln162 provides a ligand contact to (2R)-2-phosphoglycerate. The active-site Proton donor is Glu204. The Mg(2+) site is built by Asp251, Glu297, and Asp324. Residues Lys349, Arg378, Ser379, and Lys400 each contribute to the (2R)-2-phosphoglycerate site. Lys349 serves as the catalytic Proton acceptor.

Belongs to the enolase family. The cofactor is Mg(2+).

The protein localises to the cytoplasm. It is found in the secreted. It localises to the cell surface. It carries out the reaction (2R)-2-phosphoglycerate = phosphoenolpyruvate + H2O. The protein operates within carbohydrate degradation; glycolysis; pyruvate from D-glyceraldehyde 3-phosphate: step 4/5. Functionally, catalyzes the reversible conversion of 2-phosphoglycerate (2-PG) into phosphoenolpyruvate (PEP). It is essential for the degradation of carbohydrates via glycolysis. In Prosthecochloris aestuarii (strain DSM 271 / SK 413), this protein is Enolase.